Consider the following 451-residue polypeptide: Phosphoglucosamine mutase (451 aa).

Catalysis depends on S103, which acts as the Phosphoserine intermediate. Mg(2+)-binding residues include S103, D243, D245, and D247. At S103 the chain carries Phosphoserine.

The protein belongs to the phosphohexose mutase family. The cofactor is Mg(2+). Activated by phosphorylation.

The catalysed reaction is alpha-D-glucosamine 1-phosphate = D-glucosamine 6-phosphate. Catalyzes the conversion of glucosamine-6-phosphate to glucosamine-1-phosphate. The sequence is that of Phosphoglucosamine mutase from Limosilactobacillus reuteri subsp. reuteri (strain JCM 1112) (Lactobacillus reuteri).